Here is a 487-residue protein sequence, read N- to C-terminus: Wax ester synthase/diacylglycerol acyltransferase 3 (487 aa).

At 1-193 the chain is on the cytoplasmic side; it reads MYTMKKGKDM…KHASSNKKSW (193 aa). The active-site Proton acceptor is the histidine 151. A helical membrane pass occupies residues 194–214; that stretch reads WLVGRFWFMIRIIFTTVVELF. Residues 215–487 lie on the Lumenal side of the membrane; sequence KYLLTLCFMR…MEKGVHKMEV (273 aa).

In the N-terminal section; belongs to the long-chain O-acyltransferase family. In terms of tissue distribution, mostly expressed in flowers and siliques.

The protein resides in the cell membrane. The protein localises to the endoplasmic reticulum membrane. The enzyme catalyses an acyl-CoA + a 1,2-diacyl-sn-glycerol = a triacyl-sn-glycerol + CoA. It carries out the reaction a long chain fatty alcohol + a fatty acyl-CoA = a wax ester + CoA. It participates in glycerolipid metabolism; triacylglycerol biosynthesis. Its pathway is lipid metabolism. Its function is as follows. Bifunctional wax ester synthase/diacylglycerol acyltransferase. Involved in cuticular wax biosynthesis. This is Wax ester synthase/diacylglycerol acyltransferase 3 from Arabidopsis thaliana (Mouse-ear cress).